The chain runs to 63 residues: Sec-independent protein translocase protein TatA (63 aa).

A helical transmembrane segment spans residues 1–21; that stretch reads MGSLSMWHWLIVLVIVLLLFG. The disordered stretch occupies residues 43–63; that stretch reads MTDEDAPETAKTVDHKADETK. Residues 53-63 show a composition bias toward basic and acidic residues; that stretch reads KTVDHKADETK.

Belongs to the TatA/E family. The Tat system comprises two distinct complexes: a TatABC complex, containing multiple copies of TatA, TatB and TatC subunits, and a separate TatA complex, containing only TatA subunits. Substrates initially bind to the TatABC complex, which probably triggers association of the separate TatA complex to form the active translocon.

It localises to the cell inner membrane. Functionally, part of the twin-arginine translocation (Tat) system that transports large folded proteins containing a characteristic twin-arginine motif in their signal peptide across membranes. TatA could form the protein-conducting channel of the Tat system. In Rhizobium etli (strain ATCC 51251 / DSM 11541 / JCM 21823 / NBRC 15573 / CFN 42), this protein is Sec-independent protein translocase protein TatA.